The following is a 312-amino-acid chain: uncharacterized protein (312 aa).

The next 6 helical transmembrane spans lie at 9–29 (LTLTFTFLYYSIPMLIVGLFI), 115–135 (LATLGFFGIIYFIILVLIGFI), 187–207 (ITIASIITSFLIEFGFFDYIT), 224–244 (ITVAVTQPINYIGAFVLAGEF), 264–284 (ILSSIPALRFLAPYYIGIYGF), and 292–312 (MISTLVRILITALFVIITLIL).

It localises to the cell membrane. This is an uncharacterized protein from Methanocaldococcus jannaschii (strain ATCC 43067 / DSM 2661 / JAL-1 / JCM 10045 / NBRC 100440) (Methanococcus jannaschii).